The chain runs to 204 residues: Thymidylate kinase (204 aa).

11-18 (GLDKSGKT) is a binding site for ATP.

It belongs to the thymidylate kinase family.

It carries out the reaction dTMP + ATP = dTDP + ADP. It functions in the pathway pyrimidine metabolism; dTTP biosynthesis. The chain is Thymidylate kinase (TMK) from Camelus.